Reading from the N-terminus, the 817-residue chain is Putative ATP-dependent RNA helicase R350 (817 aa).

The interval 1-29 (MNRRNRSNDLNPEPSIENPNNQIAEEFPG) is disordered. The span at 17–29 (ENPNNQIAEEFPG) shows a compositional bias: polar residues. One can recognise a Helicase ATP-binding domain in the interval 93–271 (LNPQGPYTSI…ALMFNLLRPG (179 aa)). 106 to 113 (HGLGSGKT) provides a ligand contact to ATP. Positions 206 to 209 (DEAH) match the DEAH box motif. The 167-residue stretch at 495-661 (LAIAFMTYIS…STDEYVEDQA (167 aa)) folds into the Helicase C-terminal domain.

The protein belongs to the DEAD box helicase family. DEAH subfamily.

It is found in the virion. It catalyses the reaction ATP + H2O = ADP + phosphate + H(+). This is Putative ATP-dependent RNA helicase R350 from Acanthamoeba polyphaga mimivirus (APMV).